We begin with the raw amino-acid sequence, 194 residues long: Protein GrpE (194 aa).

Belongs to the GrpE family. Homodimer.

The protein resides in the cytoplasm. Functionally, participates actively in the response to hyperosmotic and heat shock by preventing the aggregation of stress-denatured proteins, in association with DnaK and GrpE. It is the nucleotide exchange factor for DnaK and may function as a thermosensor. Unfolded proteins bind initially to DnaJ; upon interaction with the DnaJ-bound protein, DnaK hydrolyzes its bound ATP, resulting in the formation of a stable complex. GrpE releases ADP from DnaK; ATP binding to DnaK triggers the release of the substrate protein, thus completing the reaction cycle. Several rounds of ATP-dependent interactions between DnaJ, DnaK and GrpE are required for fully efficient folding. The polypeptide is Protein GrpE (Aliivibrio fischeri (strain ATCC 700601 / ES114) (Vibrio fischeri)).